We begin with the raw amino-acid sequence, 508 residues long: Heat shock 70 kDa protein 14 (508 aa).

It belongs to the heat shock protein 70 family. As to quaternary structure, component of ribosome-associated complex (RAC).

The protein localises to the cytoplasm. Its subcellular location is the cytosol. Component of the ribosome-associated complex (RAC), a complex involved in folding or maintaining nascent polypeptides in a folding-competent state. This is Heat shock 70 kDa protein 14 (hspa14) from Xenopus tropicalis (Western clawed frog).